Here is a 368-residue protein sequence, read N- to C-terminus: Cytoskeleton protein RodZ (368 aa).

The Cytoplasmic portion of the chain corresponds to 1 to 111; it reads MNTEASQDQT…LGKKHKKRDG (111 aa). An HTH cro/C1-type domain is found at 19–79; it reads LRQARESLGL…KLVHLPEDEL (61 aa). Residues 30–49 constitute a DNA-binding region (H-T-H motif); the sequence is QQTVAERLCLKVSTIRDIEE. A helical; Signal-anchor for type II membrane protein membrane pass occupies residues 112–132; sequence WLMSFTWLIVLVVLGLTGAWW. The Periplasmic portion of the chain corresponds to 133–368; that stretch reads WQNHQAQQAE…RVARLTVGVE (236 aa). The disordered stretch occupies residues 151–243; that stretch reads SAQLSQNGGQ…STEPVDTANT (93 aa). Residues 193–221 are compositionally biased toward low complexity; sequence STSAVTNSATTSSATTSSVPTTSSVPKTT. The span at 229-243 shows a compositional bias: polar residues; the sequence is VPKTNSTEPVDTANT.

It belongs to the RodZ family.

It is found in the cell inner membrane. In terms of biological role, cytoskeletal protein that is involved in cell-shape control through regulation of the length of the long axis. In Yersinia pseudotuberculosis serotype O:3 (strain YPIII), this protein is Cytoskeleton protein RodZ.